The following is a 413-amino-acid chain: S-adenosylmethionine synthase (413 aa).

His15 is an ATP binding site. Asp17 contributes to the Mg(2+) binding site. K(+) is bound at residue Glu43. Residues Glu56 and Gln100 each contribute to the L-methionine site. The interval 100–110 (QSPDISQGVNE) is flexible loop. ATP contacts are provided by residues 171–173 (DGK), 248–249 (KF), Asp257, 263–264 (RK), Ala280, and Lys284. Asp257 lines the L-methionine pocket. L-methionine is bound at residue Lys288.

Belongs to the AdoMet synthase family. Homotetramer; dimer of dimers. Mg(2+) is required as a cofactor. It depends on K(+) as a cofactor.

It is found in the cytoplasm. It catalyses the reaction L-methionine + ATP + H2O = S-adenosyl-L-methionine + phosphate + diphosphate. It participates in amino-acid biosynthesis; S-adenosyl-L-methionine biosynthesis; S-adenosyl-L-methionine from L-methionine: step 1/1. Catalyzes the formation of S-adenosylmethionine (AdoMet) from methionine and ATP. The overall synthetic reaction is composed of two sequential steps, AdoMet formation and the subsequent tripolyphosphate hydrolysis which occurs prior to release of AdoMet from the enzyme. The polypeptide is S-adenosylmethionine synthase (Prochlorococcus marinus (strain MIT 9215)).